A 340-amino-acid chain; its full sequence is Probable complex I intermediate-associated protein 30, mitochondrial (340 aa).

It belongs to the CIA30 family.

The protein localises to the mitochondrion. Chaperone protein involved in the assembly of the mitochondrial NADH:ubiquinone oxidoreductase complex (complex I). Required for normal growth and reproduction. In Caenorhabditis elegans, this protein is Probable complex I intermediate-associated protein 30, mitochondrial (nuaf-1).